The sequence spans 72 residues: Caerin-regulated peptide (72 aa).

Positions 1 to 22 (MAFLKKSLLLVLFLGLVSLSIC) are cleaved as a signal peptide. Positions 23–43 (DEEKRENEDEEEQEDDEQSEE) are excised as a propeptide. Residues 24 to 46 (EEKRENEDEEEQEDDEQSEEKRG) form a disordered region. Acidic residues predominate over residues 30–41 (EDEEEQEDDEQS).

As to expression, expressed by the skin glands.

The protein localises to the secreted. Has antibacterial activity against Gram-positive bacterium M.luteus NCT C2665 and against Gram-negative bacterium E.coli K12D31. The polypeptide is Caerin-regulated peptide (Agalychnis callidryas (Red-eyed tree frog)).